Here is a 265-residue protein sequence, read N- to C-terminus: Type III pantothenate kinase (265 aa).

17 to 24 contributes to the ATP binding site; the sequence is DIGNTSIS. 114–117 is a binding site for substrate; it reads GSDV. The active-site Proton acceptor is the aspartate 116. Aspartate 137 serves as a coordination point for K(+). Threonine 140 is an ATP binding site. Position 192 (threonine 192) interacts with substrate.

Belongs to the type III pantothenate kinase family. Homodimer. NH4(+) is required as a cofactor. Requires K(+) as cofactor.

The protein localises to the cytoplasm. The enzyme catalyses (R)-pantothenate + ATP = (R)-4'-phosphopantothenate + ADP + H(+). Its pathway is cofactor biosynthesis; coenzyme A biosynthesis; CoA from (R)-pantothenate: step 1/5. Its function is as follows. Catalyzes the phosphorylation of pantothenate (Pan), the first step in CoA biosynthesis. The protein is Type III pantothenate kinase of Borrelia hermsii (strain HS1 / DAH).